The following is a 192-amino-acid chain: Adenylate kinase (192 aa).

10 to 15 (GAGKGT) provides a ligand contact to ATP. The interval 30 to 59 (STGDMLRTAVAQATEVGKRAKAVMDAGQLV) is NMP. AMP is bound by residues Thr31, Arg36, 57–59 (QLV), 85–88 (GYPR), and Gln92. The interval 126–142 (NRVTETVAAGGTVRSDD) is LID. Arg127 contacts ATP. The AMP site is built by Arg139 and Arg150. Residue Ala178 participates in ATP binding.

Belongs to the adenylate kinase family. As to quaternary structure, monomer.

It is found in the cytoplasm. The enzyme catalyses AMP + ATP = 2 ADP. It participates in purine metabolism; AMP biosynthesis via salvage pathway; AMP from ADP: step 1/1. Catalyzes the reversible transfer of the terminal phosphate group between ATP and AMP. Plays an important role in cellular energy homeostasis and in adenine nucleotide metabolism. The chain is Adenylate kinase from Rhizobium meliloti (strain 1021) (Ensifer meliloti).